Reading from the N-terminus, the 313-residue chain is Dihydroorotate dehydrogenase (fumarate) (313 aa).

Residues Ala-20 and 44 to 45 (KS) each bind FMN. Substrate contacts are provided by residues Lys-44, 68–72 (NSMGL), and Asn-128. FMN is bound at residue Asn-128. Cys-131 serves as the catalytic Nucleophile. Asn-133 is a substrate binding site. FMN-binding residues include Lys-165 and Val-194. 195-196 (NS) is a binding site for substrate. Residues Gly-223, Cys-249, 249–251 (CGG), and 272–273 (GT) each bind FMN.

Belongs to the dihydroorotate dehydrogenase family. Type 1 subfamily. As to quaternary structure, homodimer. FMN serves as cofactor.

It localises to the cytoplasm. It catalyses the reaction (S)-dihydroorotate + fumarate = orotate + succinate. It functions in the pathway pyrimidine metabolism; UMP biosynthesis via de novo pathway. Catalyzes the conversion of dihydroorotate to orotate with fumarate as the electron acceptor. Molecular oxygen can replace fumarate in vitro. This Trypanosoma brucei brucei (strain 927/4 GUTat10.1) protein is Dihydroorotate dehydrogenase (fumarate).